We begin with the raw amino-acid sequence, 122 residues long: Large ribosomal subunit protein uL18 (122 aa).

The protein belongs to the universal ribosomal protein uL18 family. Part of the 50S ribosomal subunit; part of the 5S rRNA/L5/L18/L25 subcomplex. Contacts the 5S and 23S rRNAs.

Functionally, this is one of the proteins that bind and probably mediate the attachment of the 5S RNA into the large ribosomal subunit, where it forms part of the central protuberance. This is Large ribosomal subunit protein uL18 from Syntrophotalea carbinolica (strain DSM 2380 / NBRC 103641 / GraBd1) (Pelobacter carbinolicus).